The primary structure comprises 594 residues: NADH-ubiquinone oxidoreductase chain 5 (594 aa).

Helical transmembrane passes span 1 to 21, 43 to 63, 87 to 107, 114 to 134, 137 to 157, 171 to 191, 211 to 233, 241 to 261, 272 to 292, 301 to 320, 325 to 347, 366 to 386, 409 to 429, 457 to 477, and 486 to 506; these read MNLF…PIMM, AFLI…EMII, IVFA…SMWY, INQF…LVTA, LFQL…LIGW, AILY…WFLS, LPLM…HPWL, TPVS…FLLI, LMQT…AMCA, IIAF…IGIN, AFLH…GSII, MPFT…VPFL, LLIT…IIFF, LMAG…PMTT, and LKMT…EITL.

Belongs to the complex I subunit 5 family. In terms of assembly, core subunit of respiratory chain NADH dehydrogenase (Complex I) which is composed of 45 different subunits.

It is found in the mitochondrion inner membrane. It catalyses the reaction a ubiquinone + NADH + 5 H(+)(in) = a ubiquinol + NAD(+) + 4 H(+)(out). Its function is as follows. Core subunit of the mitochondrial membrane respiratory chain NADH dehydrogenase (Complex I) which catalyzes electron transfer from NADH through the respiratory chain, using ubiquinone as an electron acceptor. Essential for the catalytic activity and assembly of complex I. The polypeptide is NADH-ubiquinone oxidoreductase chain 5 (MT-ND5) (Hippopotamus amphibius (Hippopotamus)).